Consider the following 421-residue polypeptide: Imidazolonepropionase (421 aa).

Fe(3+) is bound by residues His81 and His83. 2 residues coordinate Zn(2+): His81 and His83. 4-imidazolone-5-propanoate-binding residues include Arg90, Tyr153, and His186. An N-formimidoyl-L-glutamate-binding site is contributed by Tyr153. His251 provides a ligand contact to Fe(3+). Residue His251 participates in Zn(2+) binding. Position 254 (Glu254) interacts with 4-imidazolone-5-propanoate. Fe(3+) is bound at residue Asp326. Position 326 (Asp326) interacts with Zn(2+). Residues Asn328 and Gly330 each contribute to the N-formimidoyl-L-glutamate site. Ser331 contacts 4-imidazolone-5-propanoate.

Belongs to the metallo-dependent hydrolases superfamily. HutI family. It depends on Zn(2+) as a cofactor. The cofactor is Fe(3+).

It is found in the cytoplasm. It carries out the reaction 4-imidazolone-5-propanoate + H2O = N-formimidoyl-L-glutamate. It participates in amino-acid degradation; L-histidine degradation into L-glutamate; N-formimidoyl-L-glutamate from L-histidine: step 3/3. In terms of biological role, catalyzes the hydrolytic cleavage of the carbon-nitrogen bond in imidazolone-5-propanoate to yield N-formimidoyl-L-glutamate. It is the third step in the universal histidine degradation pathway. The protein is Imidazolonepropionase of Streptococcus pyogenes serotype M1.